The chain runs to 633 residues: 1-deoxy-D-xylulose-5-phosphate synthase (633 aa).

Positions Met1 to Gln22 are disordered. Thiamine diphosphate contacts are provided by residues His87 and Gly128–Ser130. Asp159 is a binding site for Mg(2+). Thiamine diphosphate-binding positions include Gly160 to Ala161, Asn188, Phe295, and Glu378. Residue Asn188 participates in Mg(2+) binding.

This sequence belongs to the transketolase family. DXPS subfamily. As to quaternary structure, homodimer. The cofactor is Mg(2+). Thiamine diphosphate is required as a cofactor.

The enzyme catalyses D-glyceraldehyde 3-phosphate + pyruvate + H(+) = 1-deoxy-D-xylulose 5-phosphate + CO2. It functions in the pathway metabolic intermediate biosynthesis; 1-deoxy-D-xylulose 5-phosphate biosynthesis; 1-deoxy-D-xylulose 5-phosphate from D-glyceraldehyde 3-phosphate and pyruvate: step 1/1. Its function is as follows. Catalyzes the acyloin condensation reaction between C atoms 2 and 3 of pyruvate and glyceraldehyde 3-phosphate to yield 1-deoxy-D-xylulose-5-phosphate (DXP). This chain is 1-deoxy-D-xylulose-5-phosphate synthase, found in Pseudomonas fluorescens (strain ATCC BAA-477 / NRRL B-23932 / Pf-5).